The following is a 202-amino-acid chain: Pyridoxal 5'-phosphate synthase subunit PdxT (202 aa).

50 to 52 (GES) lines the L-glutamine pocket. C82 acts as the Nucleophile in catalysis. Residues R111 and 140 to 141 (IR) contribute to the L-glutamine site. Catalysis depends on charge relay system residues H176 and E178.

This sequence belongs to the glutaminase PdxT/SNO family. As to quaternary structure, in the presence of PdxS, forms a dodecamer of heterodimers. Only shows activity in the heterodimer.

It carries out the reaction aldehydo-D-ribose 5-phosphate + D-glyceraldehyde 3-phosphate + L-glutamine = pyridoxal 5'-phosphate + L-glutamate + phosphate + 3 H2O + H(+). The catalysed reaction is L-glutamine + H2O = L-glutamate + NH4(+). Its pathway is cofactor biosynthesis; pyridoxal 5'-phosphate biosynthesis. In terms of biological role, catalyzes the hydrolysis of glutamine to glutamate and ammonia as part of the biosynthesis of pyridoxal 5'-phosphate. The resulting ammonia molecule is channeled to the active site of PdxS. The protein is Pyridoxal 5'-phosphate synthase subunit PdxT of Streptomyces coelicolor (strain ATCC BAA-471 / A3(2) / M145).